A 471-amino-acid polypeptide reads, in one-letter code: Ubiquitin-conjugating enzyme E2 variant 3 (471 aa).

A UEV domain is found at 2 to 145 (DVNSEPVKKV…EEEPPLGTKS (144 aa)). 183–211 (GDLGIAAVLSIMAKSCVDKLVLIDIPENS) contacts NAD(+).

The protein in the N-terminal section; belongs to the ubiquitin-conjugating enzyme family. UEV subfamily. This sequence in the C-terminal section; belongs to the LDH/MDH superfamily. In terms of assembly, homodimer.

Its function is as follows. Possible negative regulator of polyubiquitination. In Danio rerio (Zebrafish), this protein is Ubiquitin-conjugating enzyme E2 variant 3 (uevld).